Reading from the N-terminus, the 785-residue chain is 5-methyltetrahydropteroyltriglutamate--homocysteine methyltransferase (785 aa).

Residues 15–18 (RELK) and lysine 121 contribute to the 5-methyltetrahydropteroyltri-L-glutamate site. Residues 460–462 (IGS) and glutamate 513 contribute to the L-homocysteine site. Residues 460–462 (IGS) and glutamate 513 contribute to the L-methionine site. 5-methyltetrahydropteroyltri-L-glutamate is bound by residues 544 to 545 (RC) and tryptophan 590. Residue aspartate 628 coordinates L-homocysteine. Residue aspartate 628 coordinates L-methionine. A 5-methyltetrahydropteroyltri-L-glutamate-binding site is contributed by glutamate 634. The Zn(2+) site is built by histidine 670, cysteine 672, and glutamate 694. Histidine 723 functions as the Proton donor in the catalytic mechanism. Cysteine 755 is a binding site for Zn(2+).

It belongs to the vitamin-B12 independent methionine synthase family. It depends on Zn(2+) as a cofactor.

The enzyme catalyses 5-methyltetrahydropteroyltri-L-glutamate + L-homocysteine = tetrahydropteroyltri-L-glutamate + L-methionine. Its pathway is amino-acid biosynthesis; L-methionine biosynthesis via de novo pathway; L-methionine from L-homocysteine (MetE route): step 1/1. Catalyzes the transfer of a methyl group from 5-methyltetrahydrofolate to homocysteine resulting in methionine formation. This chain is 5-methyltetrahydropteroyltriglutamate--homocysteine methyltransferase, found in Nitratidesulfovibrio vulgaris (strain ATCC 29579 / DSM 644 / CCUG 34227 / NCIMB 8303 / VKM B-1760 / Hildenborough) (Desulfovibrio vulgaris).